The primary structure comprises 157 residues: F-box protein SNE (157 aa).

The F-box domain maps to 24-70; that stretch reads PVFSINDHHDVLVEILRRLDGSSLCSAACVCRLWSAVARNDSIWEEL.

Part of a SCF (ASK-cullin-F-box) protein ligase complex. Interacts directly with SKP1A and SKP1B. In terms of tissue distribution, highly expressed in flowers and at much lower level in seedlings, rosette leaves and green siliques.

Its subcellular location is the nucleus. It participates in protein modification; protein ubiquitination. Functionally, essential component of a SCF-type E3 ligase complex that positively regulates the gibberellin signaling pathway. Upon gibberellin treatment, such complex probably mediates the ubiquitination and subsequent degradation of DELLA proteins (GAI, RGA and RGL2), some repressors of the gibberellin pathway, leading to activate the pathway. Can partially complement the absence of GID2/SLY1. In Arabidopsis thaliana (Mouse-ear cress), this protein is F-box protein SNE (SNE).